The following is a 355-amino-acid chain: Probable dual-specificity RNA methyltransferase RlmN (355 aa).

Glu-107 acts as the Proton acceptor in catalysis. Residues 113-341 (TDKRLTVCVS…VSVRYSRGLE (229 aa)) form the Radical SAM core domain. An intrachain disulfide couples Cys-120 to Cys-346. Residues Cys-127, Cys-131, and Cys-134 each contribute to the [4Fe-4S] cluster site. S-adenosyl-L-methionine-binding positions include 174 to 175 (GE), Ser-204, 227 to 229 (SLH), and Asn-303. Cys-346 (S-methylcysteine intermediate) is an active-site residue.

This sequence belongs to the radical SAM superfamily. RlmN family. The cofactor is [4Fe-4S] cluster.

It localises to the cytoplasm. It carries out the reaction adenosine(2503) in 23S rRNA + 2 reduced [2Fe-2S]-[ferredoxin] + 2 S-adenosyl-L-methionine = 2-methyladenosine(2503) in 23S rRNA + 5'-deoxyadenosine + L-methionine + 2 oxidized [2Fe-2S]-[ferredoxin] + S-adenosyl-L-homocysteine. It catalyses the reaction adenosine(37) in tRNA + 2 reduced [2Fe-2S]-[ferredoxin] + 2 S-adenosyl-L-methionine = 2-methyladenosine(37) in tRNA + 5'-deoxyadenosine + L-methionine + 2 oxidized [2Fe-2S]-[ferredoxin] + S-adenosyl-L-homocysteine. In terms of biological role, specifically methylates position 2 of adenine 2503 in 23S rRNA and position 2 of adenine 37 in tRNAs. The sequence is that of Probable dual-specificity RNA methyltransferase RlmN from Trichormus variabilis (strain ATCC 29413 / PCC 7937) (Anabaena variabilis).